Consider the following 629-residue polypeptide: Pentatricopeptide repeat-containing protein At1g63150 (629 aa).

PPR repeat units lie at residues 46–81, 82–116, 117–151, 152–186, 187–221, 222–256, 257–291, 292–326, 327–361, 362–396, 397–431, 432–466, 467–501, 502–532, 534–568, and 569–603; these read ASGD…RPFP, SIVE…GISH, DLYT…GYEP, DIVT…GYKP, DTFT…GCQP, DLVT…RIKA, NVVI…GIRP, NVVT…KINP, NVVT…SIDP, DTIT…DCLP, NIQT…GLVG, NTVT…RVPT, DIMT…EMEL, NIFI…LSIK, DVVT…GTLP, and NSGT…GFVG.

Belongs to the PPR family. P subfamily.

The sequence is that of Pentatricopeptide repeat-containing protein At1g63150 from Arabidopsis thaliana (Mouse-ear cress).